The chain runs to 462 residues: uncharacterized protein (462 aa).

WD repeat units follow at residues 170 to 209 (GGERPIAIVRFSNNGNHFASGSWGGQVKVWNSDNLSEVQL), 212 to 260 (GHTD…PLLR), 263 to 302 (GHLARVGRVAFHPSGDYLVSASFDTTWRLWDVHTGVELLM), 305 to 344 (GHSEGIFSIACQPDGSLVSSGGNDAIGRIWDLRSGKSIMV), 347 to 386 (EHIRQIVAMAWSPNGYQLATSSADDTVKIWDLRKVSLAHT), 389 to 430 (AHSS…LIKS), and 433 to 462 (GHEEKVMSVDGYGDRFISSGYDRTIKLWYP).

It is found in the cytoplasm. This is an uncharacterized protein from Schizosaccharomyces pombe (strain 972 / ATCC 24843) (Fission yeast).